Here is a 284-residue protein sequence, read N- to C-terminus: RNase adapter protein RapZ (284 aa).

Residue 8-15 (GRSGSGKS) coordinates ATP. 56-59 (DVRN) is a binding site for GTP. The tract at residues 266-284 (RSRGKNVQSRHRTLEKRKS) is RNA-binding.

Belongs to the RapZ-like family. RapZ subfamily. As to quaternary structure, homotrimer.

Functionally, modulates the synthesis of GlmS, by affecting the processing and stability of the regulatory small RNA GlmZ. When glucosamine-6-phosphate (GlcN6P) concentrations are high in the cell, RapZ binds GlmZ and targets it to cleavage by RNase E. Consequently, GlmZ is inactivated and unable to activate GlmS synthesis. Under low GlcN6P concentrations, RapZ is sequestered and inactivated by an other regulatory small RNA, GlmY, preventing GlmZ degradation and leading to synthesis of GlmS. The chain is RNase adapter protein RapZ from Klebsiella pneumoniae (strain 342).